A 123-amino-acid polypeptide reads, in one-letter code: Ribosome-binding factor A (123 aa).

Belongs to the RbfA family. As to quaternary structure, monomer. Binds 30S ribosomal subunits, but not 50S ribosomal subunits or 70S ribosomes.

Its subcellular location is the cytoplasm. Functionally, one of several proteins that assist in the late maturation steps of the functional core of the 30S ribosomal subunit. Associates with free 30S ribosomal subunits (but not with 30S subunits that are part of 70S ribosomes or polysomes). Required for efficient processing of 16S rRNA. May interact with the 5'-terminal helix region of 16S rRNA. The chain is Ribosome-binding factor A from Legionella pneumophila (strain Lens).